The chain runs to 264 residues: MRIALGISYSGSAYEGWQSQLSGKTVQDKLELALSRFAVQPIRVMCAGRTDAGVHALMQVVHFDTPLQRETSSWVRGTNAFLPSDIAVQWAQPVPDEFHSRASAIARRYAYVVLESPVRPSVEAGRVGWVYRPLDGDAMRQAALHLMGEHDFSSFRAAQCQAKSPVKTMSRIEISQRAGPGSRYWRFEFEANAFLHHMIRNIMGCLLAIGQGNHPPEWLAEVVAARRRDAAAPTFSPDGLYFLGPVYEERHGLPSRTAAYDWLP.

Aspartate 51 functions as the Nucleophile in the catalytic mechanism. A substrate-binding site is contributed by tyrosine 109.

The protein belongs to the tRNA pseudouridine synthase TruA family. Homodimer.

The enzyme catalyses uridine(38/39/40) in tRNA = pseudouridine(38/39/40) in tRNA. In terms of biological role, formation of pseudouridine at positions 38, 39 and 40 in the anticodon stem and loop of transfer RNAs. The chain is tRNA pseudouridine synthase A from Polaromonas naphthalenivorans (strain CJ2).